The sequence spans 368 residues: Peptide chain release factor 2 (368 aa).

The residue at position 250 (Q250) is an N5-methylglutamine.

Belongs to the prokaryotic/mitochondrial release factor family. In terms of processing, methylated by PrmC. Methylation increases the termination efficiency of RF2.

It localises to the cytoplasm. Peptide chain release factor 2 directs the termination of translation in response to the peptide chain termination codons UGA and UAA. This chain is Peptide chain release factor 2, found in Rickettsia conorii (strain ATCC VR-613 / Malish 7).